Consider the following 509-residue polypeptide: Cytochrome P450 monooxygenase ORF9 (509 aa).

2 helical membrane-spanning segments follow: residues 20 to 40 and 309 to 329; these read IYVLPFVISAAALCYFIGLIV and LIIAGGETVATFLAATVYYLL. An N-linked (GlcNAc...) asparagine glycan is attached at Asn353. Cys448 is a heme binding site.

The protein belongs to the cytochrome P450 family. Heme serves as cofactor.

It localises to the membrane. The protein operates within sesquiterpene biosynthesis. In terms of biological role, cytochrome P450 monooxygenase; part of the gene cluster that mediates the biosynthesis of PR-toxin, a bicyclic sesquiterpene belonging to the eremophilane class and acting as a mycotoxin. The first step of the pathway is catalyzed by the aristolochene synthase which performs the cyclization of trans,trans-farnesyl diphosphate (FPP) to the bicyclic sesquiterpene aristolochene. Following the formation of aristolochene, the non-oxygenated aristolochene is converted to the trioxygenated intermediate eremofortin B, via 7-epi-neopetasone. This conversion appears to involve three enzymes, a hydroxysterol oxidase-like enzyme, the quinone-oxidase prx3 that forms the quinone-type-structure in the bicyclic nucleus of aristolochene with the C8-oxo group and the C-3 hydroxyl group, and the P450 monooxygenase ORF6 that introduces the epoxide at the double bond between carbons 1 and 2. No monoxy or dioxy-intermediates have been reported to be released to the broth, so these three early oxidative reactions may be coupled together. Eremofortin B is further oxidized by another P450 monooxygenase, that introduces a second epoxide between carbons 7 and 11 prior to acetylation to eremofortin A by the acetyltransferase ORF8. The second epoxidation may be performed by a second P450 monooxygenase. After the acetylation step, eremofortin A is converted to eremofortin C and then to PR-toxin. First the conversion of eremofortin A to eremofortin C proceeds by oxidation of the side chain of the molecule at C-12 and is catalyzed by the short-chain oxidoreductase prx1. The cytochrome P450 monooxygenase ORF6 is probably also involved in this step. The primary alcohol formed at C-12 is finally oxidized by the short-chain alcohol dehydrogenase prx4 that forms PR-toxin. The chain is Cytochrome P450 monooxygenase ORF9 from Penicillium roqueforti (strain FM164).